A 182-amino-acid polypeptide reads, in one-letter code: MATLLLEDGTIESNLDEIVRELAPLGIYLKHYDPGTSILFPHLLTQDALTDKEKCHIVDLHNSVFEFIQQENGYLWCDLLNVHPGSPNLQTLIATYAQYHTHTAPEALYVLAGEMIFGFVKPDGSQVQLLVQSQDYLHIPSGVEHWCSLTASLNFKAVRYFTAADGWVPNYTGTRLNDSLNK.

Fe(2+) is bound by residues H100, H102, E106, and H145. Residues H100, H102, E106, and H145 each contribute to the Ni(2+) site.

Belongs to the acireductone dioxygenase (ARD) family. In terms of assembly, monomer. The cofactor is Fe(2+). Ni(2+) serves as cofactor.

It carries out the reaction 1,2-dihydroxy-5-(methylsulfanyl)pent-1-en-3-one + O2 = 3-(methylsulfanyl)propanoate + CO + formate + 2 H(+). It catalyses the reaction 1,2-dihydroxy-5-(methylsulfanyl)pent-1-en-3-one + O2 = 4-methylsulfanyl-2-oxobutanoate + formate + 2 H(+). It functions in the pathway amino-acid biosynthesis; L-methionine biosynthesis via salvage pathway; L-methionine from S-methyl-5-thio-alpha-D-ribose 1-phosphate: step 5/6. In terms of biological role, catalyzes 2 different reactions between oxygen and the acireductone 1,2-dihydroxy-3-keto-5-methylthiopentene (DHK-MTPene) depending upon the metal bound in the active site. Fe-containing acireductone dioxygenase (Fe-ARD) produces formate and 2-keto-4-methylthiobutyrate (KMTB), the alpha-ketoacid precursor of methionine in the methionine recycle pathway. Ni-containing acireductone dioxygenase (Ni-ARD) produces methylthiopropionate, carbon monoxide and formate, and does not lie on the methionine recycle pathway. The sequence is that of Acireductone dioxygenase from Nostoc sp. (strain PCC 7120 / SAG 25.82 / UTEX 2576).